The sequence spans 346 residues: Putative aquaporin-7B (346 aa).

Over 1 to 40 (MVQASGHRRSTRGSKMVSWSVIAKIQEIWCEEDERKMVRE) the chain is Cytoplasmic. Residues 41–58 (FLAEFMSTYVMMVFGLGS) traverse the membrane as a helical segment. Topologically, residues 59–71 (VAHMVLNKTYGSY) are extracellular. The chain crosses the membrane as a helical span at residues 72–89 (LGVNLGFGFGVTMGVHVA). The Cytoplasmic portion of the chain corresponds to 90 to 93 (GRIS). Residues 94-107 (GAHMNAAVTFTNCA) constitute an intramembrane region (discontinuously helical). Residues 98–100 (NAA) carry the NPA 1 motif. At 108 to 115 (LGRVPWRK) the chain is on the cytoplasmic side. A helical transmembrane segment spans residues 116–136 (FPVHVLGQFLGSFLAAATIYS). Residues 137–174 (LFYTAILHFSGGELMVTGPFATAGIFATYLPDHMTLWR) are Extracellular-facing. The helical transmembrane segment at 175–192 (GFLNEEWLTRMLQLCLFT) threads the bilayer. The Cytoplasmic portion of the chain corresponds to 193 to 204 (ITDQENNPALPG). The chain crosses the membrane as a helical span at residues 205-221 (THALVISILVVIIRVSH). The Extracellular portion of the chain corresponds to 222-225 (GINT). Residues 226–239 (GYAINPSRDPPPSI) constitute an intramembrane region (discontinuously helical). Positions 230–232 (NPS) match the NPA 2 motif. At 240–257 (FTFIAGWGKQVFSDGENW) the chain is on the extracellular side. Residues 258-279 (WWVPVVAPLLGASLGGIIYLVF) traverse the membrane as a helical segment. Topologically, residues 280–346 (IGSTIPREPL…LHESMALEHF (67 aa)) are cytoplasmic.

The protein belongs to the MIP/aquaporin (TC 1.A.8) family. Homotetramer; each monomer provides an independent glycerol/water pore.

Its subcellular location is the membrane. The enzyme catalyses glycerol(in) = glycerol(out). The catalysed reaction is H2O(in) = H2O(out). Aquaglyceroporins form homotetrameric transmembrane channels, with each monomer independently mediating glycerol and water transport across the plasma membrane along their osmotic gradient. The polypeptide is Putative aquaporin-7B (Homo sapiens (Human)).